The chain runs to 967 residues: Haze protective factor 1 (967 aa).

The first 23 residues, 1-23, serve as a signal peptide directing secretion; the sequence is MFNRFNKLQAALALVLYSQSALG. Asparagine 28 and asparagine 35 each carry an N-linked (GlcNAc...) asparagine glycan. A disordered region spans residues 72–301; sequence SSSTEVSSSI…STSSASTASG (230 aa). 9 consecutive repeat copies span residues 93–105, 106–118, 119–131, 132–144, 153–165, 166–178, 179–191, 192–204, and 205–217. A 13 X approximate repeats, Ser-rich region spans residues 93–278; sequence SITSSGSSVS…QSGSSVSGSS (186 aa). A 1-10; approximate repeat occupies 218–230; it reads SATESGSASSVPS. A 1-11; approximate repeat occupies 234–247; sequence SVTESGSSSSASES. The 1-12; approximate repeat unit spans residues 248–259; it reads SITQSGTASGSS. A 1-13 repeat occupies 266-278; it reads SVTQSGSSVSGSS. Residues asparagine 493, asparagine 601, and asparagine 638 are each glycosylated (N-linked (GlcNAc...) asparagine). Repeat copies occupy residues 745-780, 781-815, 816-854, and 855-893. The segment at 745–902 is 4.5 X approximate tandem repeats, Thr-rich; that stretch reads SSKSYTTVTV…ASPKSYTTVT (158 aa). Residues 836–857 are disordered; that stretch reads KTVTSEAPKETSETSETSAAPK. Residues 894 to 902 form a 2-5; truncated repeat; the sequence is SPKSYTTVT. The GPI-anchor amidated alanine moiety is linked to residue alanine 946. Residues 947 to 967 constitute a propeptide, removed in mature form; sequence AGLNANTLNALVGIFVLAFFN.

This sequence belongs to the SRP1/TIP1 family. Post-translationally, the GPI-anchor is attached to the protein in the endoplasmic reticulum and serves to target the protein to the cell surface. There, the glucosamine-inositol phospholipid moiety is cleaved off and the GPI-modified mannoprotein is covalently attached via its lipidless GPI glycan remnant to the 1,6-beta-glucan of the outer cell wall layer.

It is found in the secreted. It localises to the cell wall. The protein resides in the membrane. Functionally, involved in cell wall organization and biosynthesis. This chain is Haze protective factor 1 (HPF1), found in Saccharomyces cerevisiae (strain ATCC 204508 / S288c) (Baker's yeast).